Consider the following 362-residue polypeptide: MQIKEIFMIRCISCLSVVLLHIISMVLMLQAEALADISHTVDSFRTLLMFSTPAFIFISEFLLARSYPDGVPDGFLKKRGKVIFVPFLFIAAIDALLMTSAMGGEVTFLAFVQKYLANVFLGNFIGYFILVIFQFYMLHMMFHEYLKKASPKWVLSISFVVTAAYLGYFSAASPAPASEEGGAFPFFWVPFAGWLFYFCLAYYCGKEYKRFLALLNQYRWVVYGAAIASGALVVTVSYVGEIGMISSKRPDIMLYSTSMIFLCFHLFSKMKHVPKIMMFISNYSFSIYLLHAYFMIIGYVLLLNMPEIPAVPAVLLLFAVCTAGPIMTSWALNKFKYGYLFVGKIYQPKQKKVTVEVRDHAG.

10 helical membrane-spanning segments follow: residues 11–31 (CISC…MLQA), 44–64 (FRTL…FLLA), 82–102 (VIFV…TSAM), 119–139 (VFLG…YMLH), 153–173 (WVLS…SAAS), 181–201 (GGAF…FCLA), 220–240 (WVVY…SYVG), 252–267 (IMLY…FHLF), 283–303 (YSFS…VLLL), and 308–328 (IPAV…PIMT).

Belongs to the acyltransferase 3 family.

It is found in the cell membrane. The sequence is that of Putative membrane-bound acyltransferase YfiQ (yfiQ) from Bacillus subtilis (strain 168).